Reading from the N-terminus, the 114-residue chain is uncharacterized protein (114 aa).

The next 2 membrane-spanning stretches (helical) occupy residues 9 to 29 and 75 to 95; these read LAIF…SFWL and LVHF…VAII.

It localises to the cell membrane. This is an uncharacterized protein from Mycoplasma pneumoniae (strain ATCC 29342 / M129 / Subtype 1) (Mycoplasmoides pneumoniae).